The sequence spans 127 residues: Large ribosomal subunit protein bL12 (127 aa).

The protein belongs to the bacterial ribosomal protein bL12 family. Homodimer. Part of the ribosomal stalk of the 50S ribosomal subunit. Forms a multimeric L10(L12)X complex, where L10 forms an elongated spine to which 2 to 4 L12 dimers bind in a sequential fashion. Binds GTP-bound translation factors.

In terms of biological role, forms part of the ribosomal stalk which helps the ribosome interact with GTP-bound translation factors. Is thus essential for accurate translation. The protein is Large ribosomal subunit protein bL12 of Bordetella bronchiseptica (strain ATCC BAA-588 / NCTC 13252 / RB50) (Alcaligenes bronchisepticus).